The chain runs to 221 residues: N-acetyltransferase 8F1 (221 aa).

A helical membrane pass occupies residues 53 to 73 (LVLVSGSWLLAVVCIFFLLLL). Positions 69–219 (FLLLLLRFLA…RTIQLKYPFP (151 aa)) constitute an N-acetyltransferase domain.

It belongs to the camello family.

It localises to the membrane. In terms of biological role, may play a role in regulation of gastrulation. The polypeptide is N-acetyltransferase 8F1 (Rattus norvegicus (Rat)).